Here is a 383-residue protein sequence, read N- to C-terminus: Chaperone protein DnaJ (383 aa).

In terms of domain architecture, J spans 4 to 68 (DLYETLNVSR…DQRARYDRFG (65 aa)). A CR-type zinc finger spans residues 139 to 221 (GGEKEITINH…CSGRGRNQKQ (83 aa)). Positions 152, 155, 169, 172, 195, 198, 209, and 212 each coordinate Zn(2+). 4 CXXCXGXG motif repeats span residues 152-159 (CETCRGSG), 169-176 (CRNCGGQG), 195-202 (CPNCQGTG), and 209-216 (CPTCSGRG).

It belongs to the DnaJ family. In terms of assembly, homodimer. Zn(2+) is required as a cofactor.

The protein localises to the cytoplasm. In terms of biological role, participates actively in the response to hyperosmotic and heat shock by preventing the aggregation of stress-denatured proteins and by disaggregating proteins, also in an autonomous, DnaK-independent fashion. Unfolded proteins bind initially to DnaJ; upon interaction with the DnaJ-bound protein, DnaK hydrolyzes its bound ATP, resulting in the formation of a stable complex. GrpE releases ADP from DnaK; ATP binding to DnaK triggers the release of the substrate protein, thus completing the reaction cycle. Several rounds of ATP-dependent interactions between DnaJ, DnaK and GrpE are required for fully efficient folding. Also involved, together with DnaK and GrpE, in the DNA replication of plasmids through activation of initiation proteins. This chain is Chaperone protein DnaJ, found in Gloeobacter violaceus (strain ATCC 29082 / PCC 7421).